Consider the following 524-residue polypeptide: 2-isopropylmalate synthase (524 aa).

In terms of domain architecture, Pyruvate carboxyltransferase spans valine 12–threonine 274. The Mn(2+) site is built by aspartate 21, histidine 209, histidine 211, and asparagine 245. The segment at lysine 398–glycine 524 is regulatory domain.

Belongs to the alpha-IPM synthase/homocitrate synthase family. LeuA type 1 subfamily. As to quaternary structure, homodimer. It depends on Mn(2+) as a cofactor.

The protein localises to the cytoplasm. The enzyme catalyses 3-methyl-2-oxobutanoate + acetyl-CoA + H2O = (2S)-2-isopropylmalate + CoA + H(+). It participates in amino-acid biosynthesis; L-leucine biosynthesis; L-leucine from 3-methyl-2-oxobutanoate: step 1/4. Catalyzes the condensation of the acetyl group of acetyl-CoA with 3-methyl-2-oxobutanoate (2-ketoisovalerate) to form 3-carboxy-3-hydroxy-4-methylpentanoate (2-isopropylmalate). This is 2-isopropylmalate synthase from Rhodopseudomonas palustris (strain TIE-1).